A 291-amino-acid polypeptide reads, in one-letter code: Protease HtpX homolog (291 aa).

Helical transmembrane passes span 4–24 (VFLF…SARL) and 38–58 (LGML…ISLL). His144 contributes to the Zn(2+) binding site. The active site involves Glu145. Zn(2+) is bound at residue His148. Helical transmembrane passes span 159 to 179 (LIQG…AYAL) and 199 to 219 (ISSI…VMYF). Residue Glu224 coordinates Zn(2+).

It belongs to the peptidase M48B family. It depends on Zn(2+) as a cofactor.

It localises to the cell inner membrane. This is Protease HtpX homolog from Chlorobium luteolum (strain DSM 273 / BCRC 81028 / 2530) (Pelodictyon luteolum).